The primary structure comprises 775 residues: Dipeptidyl peptidase 4 (775 aa).

A signal peptide spans 1–15 (MKFLSLLLLVGVAQA). N-linked (GlcNAc...) asparagine glycosylation is found at Asn-81, Asn-111, and Asn-219. Active-site charge relay system residues include Ser-613, Asp-690, and His-725. Residue Asn-731 is glycosylated (N-linked (GlcNAc...) asparagine).

Belongs to the peptidase S9B family.

The protein resides in the secreted. The catalysed reaction is Release of an N-terminal dipeptide, Xaa-Yaa-|-Zaa-, from a polypeptide, preferentially when Yaa is Pro, provided Zaa is neither Pro nor hydroxyproline.. Extracellular dipeptidyl-peptidase which removes N-terminal dipeptides sequentially from polypeptides having unsubstituted N-termini provided that the penultimate residue is proline. Contributes to pathogenicity. In Arthroderma otae (strain ATCC MYA-4605 / CBS 113480) (Microsporum canis), this protein is Dipeptidyl peptidase 4 (DPP4).